The primary structure comprises 614 residues: DNA mismatch repair protein MutL (614 aa).

It belongs to the DNA mismatch repair MutL/HexB family.

Its function is as follows. This protein is involved in the repair of mismatches in DNA. It is required for dam-dependent methyl-directed DNA mismatch repair. May act as a 'molecular matchmaker', a protein that promotes the formation of a stable complex between two or more DNA-binding proteins in an ATP-dependent manner without itself being part of a final effector complex. In Chlorobium phaeovibrioides (strain DSM 265 / 1930) (Prosthecochloris vibrioformis (strain DSM 265)), this protein is DNA mismatch repair protein MutL.